The primary structure comprises 51 residues: Large ribosomal subunit protein eL39 (51 aa).

Positions 1-15 are enriched in basic residues; the sequence is MPSHKSFRTKQKLAK. A disordered region spans residues 1-21; sequence MPSHKSFRTKQKLAKAARQNR.

It belongs to the eukaryotic ribosomal protein eL39 family. As to quaternary structure, component of the large ribosomal subunit (LSU). Mature yeast ribosomes consist of a small (40S) and a large (60S) subunit. The 40S small subunit contains 1 molecule of ribosomal RNA (18S rRNA) and at least 33 different proteins. The large 60S subunit contains 3 rRNA molecules (25S, 5.8S and 5S rRNA) and at least 46 different proteins. eL39 interacts with yih1.

The protein localises to the cytoplasm. Functionally, component of the ribosome, a large ribonucleoprotein complex responsible for the synthesis of proteins in the cell. The small ribosomal subunit (SSU) binds messenger RNAs (mRNAs) and translates the encoded message by selecting cognate aminoacyl-transfer RNA (tRNA) molecules. The large subunit (LSU) contains the ribosomal catalytic site termed the peptidyl transferase center (PTC), which catalyzes the formation of peptide bonds, thereby polymerizing the amino acids delivered by tRNAs into a polypeptide chain. The nascent polypeptides leave the ribosome through a tunnel in the LSU and interact with protein factors that function in enzymatic processing, targeting, and the membrane insertion of nascent chains at the exit of the ribosomal tunnel. The polypeptide is Large ribosomal subunit protein eL39 (rpl39) (Schizosaccharomyces pombe (strain 972 / ATCC 24843) (Fission yeast)).